The chain runs to 370 residues: uncharacterized protein (370 aa).

This is an uncharacterized protein from Caenorhabditis elegans.